The following is a 190-amino-acid chain: Peptidyl-tRNA hydrolase (190 aa).

Y18 is a binding site for tRNA. Catalysis depends on H23, which acts as the Proton acceptor. TRNA-binding residues include F69, N71, and N117.

This sequence belongs to the PTH family. In terms of assembly, monomer.

Its subcellular location is the cytoplasm. It carries out the reaction an N-acyl-L-alpha-aminoacyl-tRNA + H2O = an N-acyl-L-amino acid + a tRNA + H(+). Hydrolyzes ribosome-free peptidyl-tRNAs (with 1 or more amino acids incorporated), which drop off the ribosome during protein synthesis, or as a result of ribosome stalling. Its function is as follows. Catalyzes the release of premature peptidyl moieties from peptidyl-tRNA molecules trapped in stalled 50S ribosomal subunits, and thus maintains levels of free tRNAs and 50S ribosomes. In Rhodococcus opacus (strain B4), this protein is Peptidyl-tRNA hydrolase.